Consider the following 590-residue polypeptide: DNA primase (590 aa).

A CHC2-type zinc finger spans residues 37-61 (CPFHTEKTPSFIVNPAGAHYHCFGC). Residues 253–333 (KKVILVEGQA…QMSVFVCKLP (81 aa)) form the Toprim domain. Glu-259, Asp-304, and Asp-306 together coordinate Mg(2+).

It belongs to the DnaG primase family. As to quaternary structure, monomer. Interacts with DnaB. Zn(2+) is required as a cofactor. Mg(2+) serves as cofactor.

The catalysed reaction is ssDNA + n NTP = ssDNA/pppN(pN)n-1 hybrid + (n-1) diphosphate.. Its function is as follows. RNA polymerase that catalyzes the synthesis of short RNA molecules used as primers for DNA polymerase during DNA replication. The polypeptide is DNA primase (Chlamydia pneumoniae (Chlamydophila pneumoniae)).